The primary structure comprises 388 residues: Chorismate synthase (388 aa).

Arg39 and Arg45 together coordinate NADP(+). FMN contacts are provided by residues 130 to 132, 251 to 252, Gly296, 311 to 315, and Arg337; these read RSS, NA, and KPIPT.

Belongs to the chorismate synthase family. In terms of assembly, homotetramer. Requires FMNH2 as cofactor.

The enzyme catalyses 5-O-(1-carboxyvinyl)-3-phosphoshikimate = chorismate + phosphate. The protein operates within metabolic intermediate biosynthesis; chorismate biosynthesis; chorismate from D-erythrose 4-phosphate and phosphoenolpyruvate: step 7/7. Catalyzes the anti-1,4-elimination of the C-3 phosphate and the C-6 proR hydrogen from 5-enolpyruvylshikimate-3-phosphate (EPSP) to yield chorismate, which is the branch point compound that serves as the starting substrate for the three terminal pathways of aromatic amino acid biosynthesis. This reaction introduces a second double bond into the aromatic ring system. The polypeptide is Chorismate synthase (Streptococcus pneumoniae serotype 19F (strain G54)).